The primary structure comprises 322 residues: uncharacterized protein (322 aa).

A run of 4 helical transmembrane segments spans residues 24–44, 68–88, 100–120, and 125–145; these read LLHL…IQIT, LFFE…LIFI, IVTS…TPTF, and VQLI…MPSL.

The protein localises to the cell membrane. This is an uncharacterized protein from Bacillus subtilis (strain 168).